The primary structure comprises 417 residues: Putative UDP-arabinose 4-epimerase 2 (417 aa).

At 1-31 the chain is on the cytoplasmic side; sequence MLNLGRARTGRQNRSMSFEGLDFADPKKNNN. A helical; Signal-anchor for type II membrane protein membrane pass occupies residues 32–54; it reads YMGKIVLVMTLTAMCILLLNQSP. The Lumenal segment spans residues 55 to 417; that stretch reads TFNTPSVFSR…YGSSSLVSAY (363 aa). Residue 71–102 participates in NAD(+) binding; sequence HVLVTGGAGYIGSHAALRLLKDSYRVTIVDNL. The Proton acceptor role is filled by Y219.

Belongs to the NAD(P)-dependent epimerase/dehydratase family. The cofactor is NAD(+).

The protein resides in the golgi apparatus. Its subcellular location is the golgi stack membrane. The enzyme catalyses UDP-beta-L-arabinopyranose = UDP-alpha-D-xylose. It functions in the pathway nucleotide-sugar biosynthesis; UDP-L-arabinose biosynthesis; UDP-L-arabinose from UDP-alpha-D-xylose: step 1/1. Its pathway is cell wall biogenesis; cell wall polysaccharide biosynthesis. This chain is Putative UDP-arabinose 4-epimerase 2, found in Arabidopsis thaliana (Mouse-ear cress).